Here is a 353-residue protein sequence, read N- to C-terminus: Phosphoribosylformylglycinamidine cyclo-ligase (353 aa).

The protein belongs to the AIR synthase family.

It is found in the cytoplasm. The catalysed reaction is 2-formamido-N(1)-(5-O-phospho-beta-D-ribosyl)acetamidine + ATP = 5-amino-1-(5-phospho-beta-D-ribosyl)imidazole + ADP + phosphate + H(+). It functions in the pathway purine metabolism; IMP biosynthesis via de novo pathway; 5-amino-1-(5-phospho-D-ribosyl)imidazole from N(2)-formyl-N(1)-(5-phospho-D-ribosyl)glycinamide: step 2/2. This chain is Phosphoribosylformylglycinamidine cyclo-ligase, found in Dinoroseobacter shibae (strain DSM 16493 / NCIMB 14021 / DFL 12).